Reading from the N-terminus, the 169-residue chain is Peptide methionine sulfoxide reductase MsrA (169 aa).

Cys10 is an active-site residue.

This sequence belongs to the MsrA Met sulfoxide reductase family.

The catalysed reaction is L-methionyl-[protein] + [thioredoxin]-disulfide + H2O = L-methionyl-(S)-S-oxide-[protein] + [thioredoxin]-dithiol. It carries out the reaction [thioredoxin]-disulfide + L-methionine + H2O = L-methionine (S)-S-oxide + [thioredoxin]-dithiol. Has an important function as a repair enzyme for proteins that have been inactivated by oxidation. Catalyzes the reversible oxidation-reduction of methionine sulfoxide in proteins to methionine. This Streptococcus agalactiae serotype III (strain NEM316) protein is Peptide methionine sulfoxide reductase MsrA.